The chain runs to 1033 residues: DNA polymerase I A, chloroplastic (1033 aa).

The span at 1–11 (MAVAPPLPPAP) shows a compositional bias: pro residues. Disordered stretches follow at residues 1–32 (MAVA…LSSP) and 104–142 (TNGT…PSNS). A chloroplast-targeting transit peptide spans 1-55 (MAVAPPLPPAPARQLRRWKGSSPRPPPWLSSPFRRTRYLSRPAFAAGGRQDYSPS). The segment covering 115 to 124 (LRHDPSEDIR) has biased composition (basic and acidic residues). Positions 125-142 (SSNYPSLYNQRERGPSNS) are enriched in polar residues. Residues 321 to 482 (FGNGKTCIWV…LYESLKNKLE (162 aa)) enclose the 3'-5' exonuclease domain. Positions 696 to 1030 (CHAIAALCEV…VDAKYAKSWY (335 aa)) are polymerase.

It belongs to the DNA polymerase type-A family. As to expression, expressed in shoot apical meristem, root apical meristem, leaf primordia and the marginal meristem.

The protein localises to the plastid. It localises to the chloroplast. The enzyme catalyses DNA(n) + a 2'-deoxyribonucleoside 5'-triphosphate = DNA(n+1) + diphosphate. Inhibited by dideoxythymidine-triphosphate (ddTTP), but not by aphidicolin and N-ethylmaleimide. In terms of biological role, in addition to polymerase activity, this DNA polymerase exhibits 5'-3' exonuclease activity. May be required for DNA replication and accumulation in plastids. The polypeptide is DNA polymerase I A, chloroplastic (Oryza sativa subsp. japonica (Rice)).